The primary structure comprises 153 residues: Endoribonuclease YbeY (153 aa).

Residues His113, His117, and His123 each coordinate Zn(2+).

The protein belongs to the endoribonuclease YbeY family. It depends on Zn(2+) as a cofactor.

The protein resides in the cytoplasm. In terms of biological role, single strand-specific metallo-endoribonuclease involved in late-stage 70S ribosome quality control and in maturation of the 3' terminus of the 16S rRNA. The protein is Endoribonuclease YbeY of Aliivibrio salmonicida (strain LFI1238) (Vibrio salmonicida (strain LFI1238)).